The sequence spans 414 residues: Bifunctional protein GlmU (414 aa).

Positions 1 to 208 are pyrophosphorylase; the sequence is MDAVILCAGS…SSKLYGIELN (208 aa). UTP is bound by residues 6–9, glutamine 74, and glycine 79; that span reads LCAG. Positions 80, 130, 142, and 162 each coordinate N-acetyl-alpha-D-glucosamine 1-phosphate. The segment at 209–228 is linker; that stretch reads GYWNDIGRPWDVLSANNYFL. Residues 229 to 414 are N-acetyltransferase; it reads KNIMPKISGN…KDELIIKKRN (186 aa). The active-site Proton acceptor is histidine 312. Acetyl-CoA-binding residues include alanine 388 and lysine 405.

The protein in the N-terminal section; belongs to the N-acetylglucosamine-1-phosphate uridyltransferase family. It in the C-terminal section; belongs to the transferase hexapeptide repeat family.

It catalyses the reaction N-acetyl-alpha-D-glucosamine 1-phosphate + UTP + H(+) = UDP-N-acetyl-alpha-D-glucosamine + diphosphate. The catalysed reaction is alpha-D-glucosamine 1-phosphate + acetyl-CoA = N-acetyl-alpha-D-glucosamine 1-phosphate + CoA + H(+). The protein operates within nucleotide-sugar biosynthesis; UDP-N-acetyl-alpha-D-glucosamine biosynthesis; N-acetyl-alpha-D-glucosamine 1-phosphate from alpha-D-glucosamine 6-phosphate (route II): step 2/2. Its pathway is nucleotide-sugar biosynthesis; UDP-N-acetyl-alpha-D-glucosamine biosynthesis; UDP-N-acetyl-alpha-D-glucosamine from N-acetyl-alpha-D-glucosamine 1-phosphate: step 1/1. Catalyzes the last two sequential reactions in the de novo biosynthetic pathway for UDP-N-acetyl-glucosamine (UDP-GlcNAc). Responsible for the acetylation of GlcN-1-P to GlcNAc-1-P, and for the uridyl transfer from UTP to GlcNAc-1-P, to produce UDP-GlcNAc and pyrophosphate. This Methanococcus vannielii (strain ATCC 35089 / DSM 1224 / JCM 13029 / OCM 148 / SB) protein is Bifunctional protein GlmU.